The following is a 338-amino-acid chain: DNA-directed RNA polymerase subunit alpha (338 aa).

Residues 1–10 (MIQKNWQTLE) are compositionally biased toward polar residues. The disordered stretch occupies residues 1 to 24 (MIQKNWQTLEKPSKLDITPGSDPK). The segment at 1 to 234 (MIQKNWQTLE…DQLQMFINFE (234 aa)) is alpha N-terminal domain (alpha-NTD). Residues 250-338 (FNKNLLRKVD…DLAKRLEEPY (89 aa)) are alpha C-terminal domain (alpha-CTD).

This sequence belongs to the RNA polymerase alpha chain family. Homodimer. The RNAP catalytic core consists of 2 alpha, 1 beta, 1 beta' and 1 omega subunit. When a sigma factor is associated with the core the holoenzyme is formed, which can initiate transcription.

The catalysed reaction is RNA(n) + a ribonucleoside 5'-triphosphate = RNA(n+1) + diphosphate. DNA-dependent RNA polymerase catalyzes the transcription of DNA into RNA using the four ribonucleoside triphosphates as substrates. This Rhodospirillum centenum (strain ATCC 51521 / SW) protein is DNA-directed RNA polymerase subunit alpha.